A 315-amino-acid chain; its full sequence is GTP cyclohydrolase MptA 1 (315 aa).

This sequence belongs to the GTP cyclohydrolase IV family. As to quaternary structure, homodimer. Requires Fe(2+) as cofactor.

The enzyme catalyses GTP + H2O = 7,8-dihydroneopterin 2',3'-cyclic phosphate + formate + diphosphate + H(+). It functions in the pathway cofactor biosynthesis; 5,6,7,8-tetrahydromethanopterin biosynthesis. In terms of biological role, converts GTP to 7,8-dihydro-D-neopterin 2',3'-cyclic phosphate, the first intermediate in the biosynthesis of coenzyme methanopterin. The polypeptide is GTP cyclohydrolase MptA 1 (Methanocella arvoryzae (strain DSM 22066 / NBRC 105507 / MRE50)).